Here is a 394-residue protein sequence, read N- to C-terminus: S-adenosylmethionine synthase 1 (394 aa).

Glu-11 contacts Mg(2+). His-17 is a binding site for ATP. Glu-45 provides a ligand contact to K(+). L-methionine contacts are provided by Glu-58 and Gln-101. ATP is bound by residues 169–171 (DGK), 237–240 (SGRF), Asp-248, 254–255 (RK), Ala-271, Lys-275, and Lys-279. Asp-248 lines the L-methionine pocket. L-methionine is bound at residue Lys-279.

This sequence belongs to the AdoMet synthase family. In terms of assembly, homotetramer. Mn(2+) is required as a cofactor. Requires Mg(2+) as cofactor. Co(2+) serves as cofactor. It depends on K(+) as a cofactor.

The protein resides in the cytoplasm. It catalyses the reaction L-methionine + ATP + H2O = S-adenosyl-L-methionine + phosphate + diphosphate. The protein operates within amino-acid biosynthesis; S-adenosyl-L-methionine biosynthesis; S-adenosyl-L-methionine from L-methionine: step 1/1. Catalyzes the formation of S-adenosylmethionine from methionine and ATP. The reaction comprises two steps that are both catalyzed by the same enzyme: formation of S-adenosylmethionine (AdoMet) and triphosphate, and subsequent hydrolysis of the triphosphate. In Triticum monococcum (Einkorn wheat), this protein is S-adenosylmethionine synthase 1 (SAMS1).